The following is a 194-amino-acid chain: uncharacterized protein (194 aa).

This is an uncharacterized protein from Acanthamoeba polyphaga (Amoeba).